The chain runs to 294 residues: 4-diphosphocytidyl-2-C-methyl-D-erythritol kinase (294 aa).

K19 is a catalytic residue. 106–116 is a binding site for ATP; it reads PVASGIGGGSA. The active site involves D148.

Belongs to the GHMP kinase family. IspE subfamily.

It carries out the reaction 4-CDP-2-C-methyl-D-erythritol + ATP = 4-CDP-2-C-methyl-D-erythritol 2-phosphate + ADP + H(+). It functions in the pathway isoprenoid biosynthesis; isopentenyl diphosphate biosynthesis via DXP pathway; isopentenyl diphosphate from 1-deoxy-D-xylulose 5-phosphate: step 3/6. Functionally, catalyzes the phosphorylation of the position 2 hydroxy group of 4-diphosphocytidyl-2C-methyl-D-erythritol. The polypeptide is 4-diphosphocytidyl-2-C-methyl-D-erythritol kinase (Rhizobium etli (strain ATCC 51251 / DSM 11541 / JCM 21823 / NBRC 15573 / CFN 42)).